The sequence spans 24 residues: Large ribosomal subunit protein uL30 (24 aa).

It belongs to the universal ribosomal protein uL30 family. As to quaternary structure, part of the 50S ribosomal subunit.

The protein is Large ribosomal subunit protein uL30 (rpmD) of Ectopseudomonas mendocina (Pseudomonas mendocina).